A 616-amino-acid chain; its full sequence is Glycogenin-1 (616 aa).

Residues leucine 10, tyrosine 16, and arginine 95 each contribute to the UDP site. Residues leucine 10, tyrosine 16, arginine 95, lysine 104, aspartate 120, aspartate 122, asparagine 158, serine 159, aspartate 185, aspartate 188, and glutamine 189 each contribute to the UDP-alpha-D-glucose site. Residues aspartate 120 and aspartate 122 each contribute to the UDP site. 2 residues coordinate Mn(2+): aspartate 120 and aspartate 122. Residue tyrosine 230 is glycosylated (O-linked (Glc...) tyrosine). UDP is bound by residues histidine 247, glycine 250, and lysine 253. Histidine 247 contacts Mn(2+). UDP-alpha-D-glucose contacts are provided by glycine 250 and lysine 253. A compositionally biased stretch (basic and acidic residues) spans 283 to 302; sequence HQLNNEVSKPKISDSDKTET. Disordered regions lie at residues 283 to 320, 335 to 354, and 371 to 516; these read HQLN…PTTN, NQNA…NPVP, and TNQP…SVDD. Basic and acidic residues predominate over residues 377-386; it reads ESREYSKEND. Over residues 400 to 419 the composition is skewed to polar residues; that stretch reads SPPNSTQEPNSSYSVVSTQA. Low complexity predominate over residues 450–461; that stretch reads STAASSNNNVSN. Polar residues-rich tracts occupy residues 462-485 and 492-503; these read QPDN…PSNP and DNIQKPSVSTND. O-linked (Glc...) tyrosine glycosylation is present at tyrosine 598.

It belongs to the glycosyltransferase 8 family. Glycogenin subfamily. Mn(2+) is required as a cofactor.

The protein localises to the cytoplasm. It is found in the vacuole. It catalyses the reaction L-tyrosyl-[glycogenin] + UDP-alpha-D-glucose = alpha-D-glucosyl-L-tyrosyl-[glycogenin] + UDP + H(+). The catalysed reaction is [1,4-alpha-D-glucosyl](n)-L-tyrosyl-[glycogenin] + UDP-alpha-D-glucose = [1,4-alpha-D-glucosyl](n+1)-L-tyrosyl-[glycogenin] + UDP + H(+). Its function is as follows. Self-glucosylating initiator of glycogen synthesis. It catalyzes the formation of a short alpha (1,4)-glucosyl chain covalently attached via a glucose 1-O-tyrosyl linkage to internal tyrosine residues and these chains act as primers for the elongation reaction catalyzed by glycogen synthase. Capable of transferring glucosyl residues to unbound acceptors such as free oligoglucans or oligoglucan derivatives. The polypeptide is Glycogenin-1 (GLG1) (Saccharomyces cerevisiae (strain YJM789) (Baker's yeast)).